Consider the following 294-residue polypeptide: Protoheme IX farnesyltransferase (294 aa).

9 consecutive transmembrane segments (helical) span residues 22 to 42, 46 to 66, 89 to 109, 116 to 136, 143 to 163, 170 to 190, 211 to 231, 232 to 252, and 272 to 292; these read VTQL…PDLP, IVIA…AINC, ITVP…MWVL, LTMW…TIIL, NIVI…AAVA, AWIL…ALAL, AFTQ…TMLP, FAVG…DVIF, and FTYS…DHYL.

The protein belongs to the UbiA prenyltransferase family. Protoheme IX farnesyltransferase subfamily.

Its subcellular location is the cell inner membrane. It catalyses the reaction heme b + (2E,6E)-farnesyl diphosphate + H2O = Fe(II)-heme o + diphosphate. It functions in the pathway porphyrin-containing compound metabolism; heme O biosynthesis; heme O from protoheme: step 1/1. Functionally, converts heme B (protoheme IX) to heme O by substitution of the vinyl group on carbon 2 of heme B porphyrin ring with a hydroxyethyl farnesyl side group. The protein is Protoheme IX farnesyltransferase of Herminiimonas arsenicoxydans.